Reading from the N-terminus, the 89-residue chain is Elongation factor 1-beta (89 aa).

This sequence belongs to the EF-1-beta/EF-1-delta family.

Promotes the exchange of GDP for GTP in EF-1-alpha/GDP, thus allowing the regeneration of EF-1-alpha/GTP that could then be used to form the ternary complex EF-1-alpha/GTP/AAtRNA. The chain is Elongation factor 1-beta from Methanococcus maripaludis (strain C6 / ATCC BAA-1332).